Reading from the N-terminus, the 332-residue chain is L-lactate dehydrogenase A chain (332 aa).

Alanine 2 carries the N-acetylalanine modification. Lysine 5 carries the N6-acetyllysine; alternate modification. Lysine 5 carries the post-translational modification N6-succinyllysine; alternate. An N6-acetyllysine modification is found at lysine 14. NAD(+) is bound at residue 29–57 (GAVGMACAISILMKDLADELALVDVMEDK). Lysine 57 carries the N6-acetyllysine; alternate modification. Residue lysine 57 forms a Glycyl lysine isopeptide (Lys-Gly) (interchain with G-Cter in SUMO2); alternate linkage. Lysine 81 carries the N6-acetyllysine modification. Arginine 99 contacts NAD(+). Arginine 106 provides a ligand contact to substrate. Lysine 118 is modified (N6-acetyllysine; alternate). Lysine 118 bears the N6-succinyllysine; alternate mark. The residue at position 126 (lysine 126) is an N6-acetyllysine. Residue asparagine 138 coordinates NAD(+). Positions 138 and 169 each coordinate substrate. Histidine 193 (proton acceptor) is an active-site residue. N6-acetyllysine is present on residues lysine 224 and lysine 232. Tyrosine 239 is modified (phosphotyrosine). At lysine 243 the chain carries N6-acetyllysine. Threonine 248 lines the substrate pocket. Threonine 309 is modified (phosphothreonine). Serine 310 carries the phosphoserine modification. Lysine 318 is modified (N6-acetyllysine; alternate). At lysine 318 the chain carries N6-succinyllysine; alternate. The residue at position 322 (threonine 322) is a Phosphothreonine.

The protein belongs to the LDH/MDH superfamily. LDH family. In terms of assembly, homotetramer. Interacts with PTEN upstream reading frame protein MP31. ISGylated.

Its subcellular location is the cytoplasm. The enzyme catalyses (S)-lactate + NAD(+) = pyruvate + NADH + H(+). It participates in fermentation; pyruvate fermentation to lactate; (S)-lactate from pyruvate: step 1/1. Functionally, interconverts simultaneously and stereospecifically pyruvate and lactate with concomitant interconversion of NADH and NAD(+). This is L-lactate dehydrogenase A chain (LDHA) from Oryctolagus cuniculus (Rabbit).